We begin with the raw amino-acid sequence, 102 residues long: Chorion protein S15 (102 aa).

Residues 1 to 18 (MKFLIAFVAIAFFACVSA) form the signal peptide.

Belongs to the chorion protein S15/S18 family.

The protein localises to the secreted. Functionally, chorion membrane (egg shell) protein; plays a role in protecting the egg from the environment. This Drosophila grimshawi (Hawaiian fruit fly) protein is Chorion protein S15 (Cp15).